Reading from the N-terminus, the 203-residue chain is Cytochrome c oxidase assembly protein CtaG (203 aa).

Over 1-19 (MDAGKAERRAGNGRRTDGR) the chain is Cytoplasmic. The chain crosses the membrane as a helical; Signal-anchor for type II membrane protein span at residues 20 to 42 (RHLVVAAACAAFIAAMVGVTYAS). At 43–203 (VPLYAMFCAL…AAARASGTGG (161 aa)) the chain is on the periplasmic side.

This sequence belongs to the COX11/CtaG family.

It is found in the cell inner membrane. Exerts its effect at some terminal stage of cytochrome c oxidase synthesis, probably by being involved in the insertion of the copper B into subunit I. This chain is Cytochrome c oxidase assembly protein CtaG, found in Xanthobacter autotrophicus (strain ATCC BAA-1158 / Py2).